The following is a 66-amino-acid chain: Small ribosomal subunit protein eS27 (66 aa).

Residues cysteine 21, cysteine 24, cysteine 40, and cysteine 43 each coordinate Zn(2+). The segment at 21–43 (CPNCGNEQTVFSHATFPVRCLSC) adopts a C4-type zinc-finger fold.

The protein belongs to the eukaryotic ribosomal protein eS27 family. Part of the 30S ribosomal subunit. The cofactor is Zn(2+).

The chain is Small ribosomal subunit protein eS27 from Sulfurisphaera tokodaii (strain DSM 16993 / JCM 10545 / NBRC 100140 / 7) (Sulfolobus tokodaii).